The following is a 1085-amino-acid chain: Carbamoyl phosphate synthase large chain (1085 aa).

Residues 1 to 399 (MPKRTDISNI…ALQKALCSLE (399 aa)) form a carboxyphosphate synthetic domain region. The ATP site is built by R127, R167, G174, E206, L208, E213, G239, V240, H241, Q283, and E297. Residues 131–326 (KEAMLKIGMD…IAKVATMLAV (196 aa)) enclose the ATP-grasp 1 domain. Mg(2+) contacts are provided by Q283, E297, and N299. The Mn(2+) site is built by Q283, E297, and N299. The oligomerization domain stretch occupies residues 400-551 (NNWLGFESLS…YAPNPLPPIG (152 aa)). Positions 552–951 (NKQEKQEKKI…AFFKAQTACF (400 aa)) are carbamoyl phosphate synthetic domain. In terms of domain architecture, ATP-grasp 2 spans 678-871 (SLFLKELDIK…LAKVATRVMV (194 aa)). 10 residues coordinate ATP: R714, K756, L758, E763, G788, I789, H790, S791, Q830, and E842. Residues Q830, E842, and N844 each coordinate Mg(2+). Mn(2+) contacts are provided by Q830, E842, and N844. Positions 952–1085 (NPIKNKGLIF…ELLALQDYLK (134 aa)) constitute an MGS-like domain. The interval 952-1085 (NPIKNKGLIF…ELLALQDYLK (134 aa)) is allosteric domain.

The protein belongs to the CarB family. As to quaternary structure, composed of two chains; the small (or glutamine) chain promotes the hydrolysis of glutamine to ammonia, which is used by the large (or ammonia) chain to synthesize carbamoyl phosphate. Tetramer of heterodimers (alpha,beta)4. It depends on Mg(2+) as a cofactor. Mn(2+) is required as a cofactor.

The enzyme catalyses hydrogencarbonate + L-glutamine + 2 ATP + H2O = carbamoyl phosphate + L-glutamate + 2 ADP + phosphate + 2 H(+). The catalysed reaction is hydrogencarbonate + NH4(+) + 2 ATP = carbamoyl phosphate + 2 ADP + phosphate + 2 H(+). It participates in amino-acid biosynthesis; L-arginine biosynthesis; carbamoyl phosphate from bicarbonate: step 1/1. It functions in the pathway pyrimidine metabolism; UMP biosynthesis via de novo pathway; (S)-dihydroorotate from bicarbonate: step 1/3. Large subunit of the glutamine-dependent carbamoyl phosphate synthetase (CPSase). CPSase catalyzes the formation of carbamoyl phosphate from the ammonia moiety of glutamine, carbonate, and phosphate donated by ATP, constituting the first step of 2 biosynthetic pathways, one leading to arginine and/or urea and the other to pyrimidine nucleotides. The large subunit (synthetase) binds the substrates ammonia (free or transferred from glutamine from the small subunit), hydrogencarbonate and ATP and carries out an ATP-coupled ligase reaction, activating hydrogencarbonate by forming carboxy phosphate which reacts with ammonia to form carbamoyl phosphate. This is Carbamoyl phosphate synthase large chain from Helicobacter pylori (strain J99 / ATCC 700824) (Campylobacter pylori J99).